A 197-amino-acid polypeptide reads, in one-letter code: dITP/XTP pyrophosphatase (197 aa).

T9–K14 contributes to the substrate binding site. Mg(2+) is bound by residues E42 and D71. The active-site Proton acceptor is D71. Residues S72, F153–D156, K176, and H181–R182 each bind substrate.

Belongs to the HAM1 NTPase family. In terms of assembly, homodimer. Mg(2+) is required as a cofactor.

The catalysed reaction is XTP + H2O = XMP + diphosphate + H(+). It carries out the reaction dITP + H2O = dIMP + diphosphate + H(+). The enzyme catalyses ITP + H2O = IMP + diphosphate + H(+). Its function is as follows. Pyrophosphatase that catalyzes the hydrolysis of nucleoside triphosphates to their monophosphate derivatives, with a high preference for the non-canonical purine nucleotides XTP (xanthosine triphosphate), dITP (deoxyinosine triphosphate) and ITP. Seems to function as a house-cleaning enzyme that removes non-canonical purine nucleotides from the nucleotide pool, thus preventing their incorporation into DNA/RNA and avoiding chromosomal lesions. This is dITP/XTP pyrophosphatase from Leptospira interrogans serogroup Icterohaemorrhagiae serovar copenhageni (strain Fiocruz L1-130).